An 861-amino-acid polypeptide reads, in one-letter code: MGTSCNKINSNSNKGKENMHFVLDDNGDSKGNASNQQVERDDKLDMETTRWNGKEFEEPLSTNKKLIIQSNNTSSQHSTPPLSISDTSTHTGSSTDNVEANPNTGFSSARKRSLRSSNLKKKFVPLSSPEESNESEFIDDDESDEVASIIDIKEDETFDSKVEIPEAAPSSSTESDEESIPLSYQSKRRRVSARASSSASSSSRTQAKSIPSHERTHYRLIRQHPELEHVWEKLEEEAPREVKQIEQPKELVLNLLPFQREGVYWLKRQEDSSFGGGILADEMGMGKTIQTIALLLSEPRGKPTLVVAPVVAIMQWKEEIDTHTNKALSTYLYYGQARDISGEELSSYDVVLTSYNVIESVYRKERSGFRRKNGVVKEKSLLHQMEFYRIILDEAHGIKSRTCNTARAVCGLRTTRKICLSGTPLQNRIGELFSLLRFLRADPFAYYYCLQCECKSLHWRFSDRSNCDECGHKPMSHTCYFNAEMLKPIQKFGYEGPGKLAFKKVHSLLKHIMLRRTKLERADDLGLPPRVVEVRKDLFNEEEEDVYQSLYMDSKRKFNTYLAEGVVLNNYANIFQLITRMRQMADHPDLVLASKRKTVDIENQENIVCKICDEVAQDAIESRCHHTFCRLCVTEYINAAGDGENVNCPSCFIPLSIDLSAPALEDFSEEKFKNASILNRIDMNSWRSSTKIEALVEELYLLRKKDRTLKSIVFSQFTSMLDLIHWRLRKAGFNCVKLDGGMTPKARAATIEAFSNDINITIFLVSLKAGGVALNLTEASQVFMMDPWWNGAVQWQAMDRIHRIGQKRPIKVITLCIENSIESKIIELQEKKAQMIHATIDQDEKALNQLSVEDMQFLFSN.

The segment covering 1–13 (MGTSCNKINSNSN) has biased composition (polar residues). The segment at 1–217 (MGTSCNKINS…KSIPSHERTH (217 aa)) is disordered. 2 stretches are compositionally biased toward basic and acidic residues: residues 14-23 (KGKENMHFVL) and 38-57 (VERDDKLDMETTRWNGKEFE). Residues 60-82 (LSTNKKLIIQSNNTSSQHSTPPL) are compositionally biased toward polar residues. Over residues 83 to 95 (SISDTSTHTGSST) the composition is skewed to low complexity. The span at 96–106 (DNVEANPNTGF) shows a compositional bias: polar residues. The segment covering 109 to 123 (ARKRSLRSSNLKKKF) has biased composition (basic residues). The segment covering 131 to 145 (ESNESEFIDDDESDE) has biased composition (acidic residues). Residues 193-204 (ARASSSASSSSR) show a composition bias toward low complexity. The 175-residue stretch at 268–442 (RQEDSSFGGG…FSLLRFLRAD (175 aa)) folds into the Helicase ATP-binding domain. 281–288 (DEMGMGKT) contacts ATP. The DEAH box signature appears at 393-396 (DEAH). The RING-type zinc finger occupies 609–652 (CKICDEVAQDAIESRCHHTFCRLCVTEYINAAGDGENVNCPSCF). The region spanning 695-848 (LVEELYLLRK…TIDQDEKALN (154 aa)) is the Helicase C-terminal domain.

This sequence belongs to the SNF2/RAD54 helicase family.

The protein localises to the nucleus. In terms of biological role, involved in global genome repair (GGR) via nucleotide excision repair (NER), in conjunction with rhp7, after UV irradiation. The sequence is that of ATP-dependent helicase rhp16 (rhp16) from Schizosaccharomyces pombe (strain 972 / ATCC 24843) (Fission yeast).